The sequence spans 528 residues: GMP synthase [glutamine-hydrolyzing] (528 aa).

In terms of domain architecture, Glutamine amidotransferase type-1 spans 13-204 (AIVILDFGSQ…VYHICGCEPD (192 aa)). The Nucleophile role is filled by C90. Active-site residues include H178 and E180. A GMPS ATP-PPase domain is found at 205 to 403 (WTTTAFIEEA…LGLPEEIVRR (199 aa)). An ATP-binding site is contributed by 232–238 (SGGVDSS).

Homodimer.

It carries out the reaction XMP + L-glutamine + ATP + H2O = GMP + L-glutamate + AMP + diphosphate + 2 H(+). The protein operates within purine metabolism; GMP biosynthesis; GMP from XMP (L-Gln route): step 1/1. Catalyzes the synthesis of GMP from XMP. The sequence is that of GMP synthase [glutamine-hydrolyzing] from Prochlorococcus marinus (strain MIT 9303).